A 418-amino-acid polypeptide reads, in one-letter code: Gamma-glutamyl phosphate reductase (418 aa).

The protein belongs to the gamma-glutamyl phosphate reductase family.

The protein resides in the cytoplasm. The enzyme catalyses L-glutamate 5-semialdehyde + phosphate + NADP(+) = L-glutamyl 5-phosphate + NADPH + H(+). The protein operates within amino-acid biosynthesis; L-proline biosynthesis; L-glutamate 5-semialdehyde from L-glutamate: step 2/2. Its function is as follows. Catalyzes the NADPH-dependent reduction of L-glutamate 5-phosphate into L-glutamate 5-semialdehyde and phosphate. The product spontaneously undergoes cyclization to form 1-pyrroline-5-carboxylate. This is Gamma-glutamyl phosphate reductase from Geobacter metallireducens (strain ATCC 53774 / DSM 7210 / GS-15).